The following is a 367-amino-acid chain: DNA replication and repair protein RecF (367 aa).

30 to 37 (GANGSGKT) serves as a coordination point for ATP.

It belongs to the RecF family.

The protein localises to the cytoplasm. Functionally, the RecF protein is involved in DNA metabolism; it is required for DNA replication and normal SOS inducibility. RecF binds preferentially to single-stranded, linear DNA. It also seems to bind ATP. This chain is DNA replication and repair protein RecF, found in Pseudomonas syringae pv. tomato (strain ATCC BAA-871 / DC3000).